Reading from the N-terminus, the 535-residue chain is Atrial natriuretic peptide receptor 3 (535 aa).

An N-terminal signal peptide occupies residues 1–26 (MRSLLLFTFSACVLLARALLAGGASS). Residues 27-40 (GGGDTGPGNRRRER) constitute a propeptide that is removed on maturation. Over 41-477 (EALAAQKIEV…CKSCGLEESA (437 aa)) the chain is Extracellular. N-linked (GlcNAc...) asparagine glycosylation occurs at Asn-81. 2 disulfide bridges follow: Cys-103-Cys-131 and Cys-208-Cys-256. N-linked (GlcNAc...) asparagine glycosylation is found at Asn-288 and Asn-389. The chain crosses the membrane as a helical span at residues 478-498 (VTGIVVGALLGAGLLMAFYFF). At 499–535 (RKKYRITIERRNHQEESNIGKHRELREDSIRSHFSVA) the chain is on the cytoplasmic side.

The protein belongs to the ANF receptor family. In terms of assembly, homodimer; disulfide-linked. Interacts with OSTN.

It localises to the cell membrane. In terms of biological role, receptor for the natriuretic peptide hormones, binding with similar affinities atrial natriuretic peptide NPPA/ANP, brain natriuretic peptide NPPB/BNP, and C-type natriuretic peptide NPPC/CNP. May function as a clearance receptor for NPPA, NPPB and NPPC, regulating their local concentrations and effects. Acts as a regulator of osteoblast differentiation and bone growth by binding to its ligand osteocrin, thereby preventing binding between NPR3/NPR-C and natriuretic peptides, leading to increase cGMP production. The sequence is that of Atrial natriuretic peptide receptor 3 (Npr3) from Rattus norvegicus (Rat).